We begin with the raw amino-acid sequence, 551 residues long: Small ribosomal subunit protein bS1 (551 aa).

S1 motif domains follow at residues 21–83, 101–167, 188–256, 273–343, 360–430, and 447–516; these read GALV…LSRE, GEMV…VSRR, GQEI…LGMK, NSRV…LGIK, DEKI…LGIK, and DAVI…VSHK.

The protein belongs to the bacterial ribosomal protein bS1 family.

Its function is as follows. Binds mRNA; thus facilitating recognition of the initiation point. It is needed to translate mRNA with a short Shine-Dalgarno (SD) purine-rich sequence. The polypeptide is Small ribosomal subunit protein bS1 (rpsA) (Coxiella burnetii (strain RSA 493 / Nine Mile phase I)).